A 510-amino-acid polypeptide reads, in one-letter code: Ribonuclease Y (510 aa).

Residues 4–24 (LLWAVVALLAGLAGGAGIGVY) form a helical membrane-spanning segment. In terms of domain architecture, KH spans 200-260 (TVSTVNLPSE…VRREVARVAL (61 aa)). The HD domain maps to 326–419 (VLQHSLECAL…VIAADAISGA (94 aa)).

It belongs to the RNase Y family.

Its subcellular location is the cell membrane. Its function is as follows. Endoribonuclease that initiates mRNA decay. This Chloroflexus aurantiacus (strain ATCC 29366 / DSM 635 / J-10-fl) protein is Ribonuclease Y.